The following is a 2033-amino-acid chain: Envoplakin (2033 aa).

Residues 1-27 are compositionally biased toward low complexity; that stretch reads MFKGLSKGSQGKGSPKGSPAKGSPKGS. 2 disordered regions span residues 1–37 and 65–85; these read MFKG…AATQ and QQDR…ETGR. The tract at residues 1–841 is globular 1; that stretch reads MFKGLSKGSQ…LEPTLAVSAP (841 aa). Residues 12-28 are 4 X 4 AA tandem repeats of K-G-S-P; it reads KGSPKGSPAKGSPKGSP. The span at 71-84 shows a compositional bias: polar residues; that stretch reads SEQSQALQHQQETG. The stretch at 229-330 is one Spectrin repeat; the sequence is YTHLQGCTRQ…LCICQETQLQ (102 aa). A compositionally biased stretch (basic and acidic residues) spans 388 to 401; that stretch reads TERATGDLQRRSRD. Disordered stretches follow at residues 388 to 418 and 891 to 916; these read TERA…PLHV and SEDI…ESEA. The SH3 domain occupies 413–470; that stretch reads QQPLHVDSICDWDSGEVQLLQGERYKLVDNTDPHAWVVQGPGGETKRAPAACFCIPAP. Residues 842 to 1673 form a central fibrous rod domain region; it reads KRPRVAPLQE…AKVSREELSQ (832 aa). Residues 845 to 1135 adopt a coiled-coil conformation; it reads RVAPLQESIQ…AISSVEPKVI (291 aa). A compositionally biased stretch (basic and acidic residues) spans 891–902; the sequence is SEDIRRTHDAKQ. Residues 1185 to 1226 form a Plectin 1 repeat; the sequence is KQRPKVQLQERVHEIFQVDPETEQEITRLKAKLQEMAGKRSG. S1575 is subject to Phosphoserine. Positions 1614-1623 are enriched in low complexity; the sequence is QEESKLLSQK. Residues 1614-1636 form a disordered region; the sequence is QEESKLLSQKTESERQKAAQRGQ. A globular 2 region spans residues 1674 to 2033; the sequence is ETQTRETNLS…ASPTVPRSLR (360 aa). A Plectin 2 repeat occupies 1678–1713; that stretch reads RETNLSTKISILEPETGKDMSPYEAYKRGIIDRGQY. The residue at position 1799 (S1799) is a Phosphoserine. Plectin repeat units follow at residues 1818 to 1855, 1856 to 1893, 1894 to 1931, 1932 to 1969, and 1970 to 2007; these read LGLG…PITG, QKLL…NTST, QRLL…RESV, LPHL…EELA, and QLLQ…PLSG. S2025 carries the post-translational modification Phosphoserine.

It belongs to the plakin or cytolinker family. As to quaternary structure, may form a homodimer or a heterodimer with PPL. Exclusively expressed in stratified squamous epithelia.

It localises to the cell junction. Its subcellular location is the desmosome. The protein localises to the cornified envelope. The protein resides in the cytoplasm. It is found in the cytoskeleton. Functionally, component of the cornified envelope of keratinocytes. May link the cornified envelope to desmosomes and intermediate filaments. This chain is Envoplakin (EVPL), found in Homo sapiens (Human).